We begin with the raw amino-acid sequence, 537 residues long: CTP synthase (537 aa).

An amidoligase domain region spans residues 1-267 (MTNTKFVFVT…ISVLEERLFG (267 aa)). Ser-15 serves as a coordination point for CTP. Ser-15 provides a ligand contact to UTP. 16–21 (SVGKGI) contributes to the ATP binding site. Tyr-56 is a binding site for L-glutamine. Asp-73 lines the ATP pocket. The Mg(2+) site is built by Asp-73 and Glu-141. CTP contacts are provided by residues 148–150 (DIE), 188–193 (KTKPTQ), and Lys-224. UTP is bound by residues 188–193 (KTKPTQ) and Lys-224. In terms of domain architecture, Glutamine amidotransferase type-1 spans 297-535 (YVVLPDAYLS…LSEAVAKASP (239 aa)). Gly-355 contacts L-glutamine. Cys-382 functions as the Nucleophile; for glutamine hydrolysis in the catalytic mechanism. Residues 383-386 (LGMQ), Glu-406, and Arg-463 contribute to the L-glutamine site. Active-site residues include His-508 and Glu-510.

This sequence belongs to the CTP synthase family. As to quaternary structure, homotetramer.

The catalysed reaction is UTP + L-glutamine + ATP + H2O = CTP + L-glutamate + ADP + phosphate + 2 H(+). It catalyses the reaction L-glutamine + H2O = L-glutamate + NH4(+). It carries out the reaction UTP + NH4(+) + ATP = CTP + ADP + phosphate + 2 H(+). It participates in pyrimidine metabolism; CTP biosynthesis via de novo pathway; CTP from UDP: step 2/2. Allosterically activated by GTP, when glutamine is the substrate; GTP has no effect on the reaction when ammonia is the substrate. The allosteric effector GTP functions by stabilizing the protein conformation that binds the tetrahedral intermediate(s) formed during glutamine hydrolysis. Inhibited by the product CTP, via allosteric rather than competitive inhibition. Functionally, catalyzes the ATP-dependent amination of UTP to CTP with either L-glutamine or ammonia as the source of nitrogen. Regulates intracellular CTP levels through interactions with the four ribonucleotide triphosphates. This chain is CTP synthase, found in Coprothermobacter proteolyticus (strain ATCC 35245 / DSM 5265 / OCM 4 / BT).